Here is a 400-residue protein sequence, read N- to C-terminus: Putative transposase for insertion sequence element IS5376 (400 aa).

The region spanning G5–M67 is the HTH IS21-type domain. Residues I20–H39 constitute a DNA-binding region (H-T-H motif). The interval R35–K55 is disordered. One can recognise an Integrase catalytic domain in the interval Y113–S287.

This sequence belongs to the transposase IS21/IS408/IS1162 family.

Its function is as follows. Involved in the transposition of the insertion sequence. In Geobacillus stearothermophilus (Bacillus stearothermophilus), this protein is Putative transposase for insertion sequence element IS5376.